Here is a 908-residue protein sequence, read N- to C-terminus: Serine/threonine-protein kinase WARTS homolog (908 aa).

Residues 42-70 are a coiled coil; it reads EIRVGRHRAKLDEIRESLKAYEHEAGLLS. 2 stretches are compositionally biased toward low complexity: residues 115–125 and 168–181; these read VSSAAVSNSNS and PSTT…TTTE. Disordered regions lie at residues 115 to 134, 162 to 183, 203 to 225, and 388 to 412; these read VSSA…GGHK, MIRN…TEES, NNNA…DSSP, and KSRA…VSSP. Over residues 392-404 the composition is skewed to pro residues; that stretch reads QPPPPQYNQPSEP. The stretch at 439–470 forms a coiled coil; the sequence is YMEQHVERLLQQYKEREKRMKQLEKEMVSAQL. Residues 502–807 enclose the Protein kinase domain; sequence FTVISHIGVG…TAQVKNHPWF (306 aa). Residues 508–516 and lysine 531 each bind ATP; that span reads IGVGAFGKV. Catalysis depends on aspartate 625, which acts as the Proton acceptor. An AGC-kinase C-terminal domain is found at 808-874; it reads RGIDWVNLRK…RHFFDTDSVG (67 aa).

Belongs to the protein kinase superfamily. AGC Ser/Thr protein kinase family. As to quaternary structure, interacts (via N-terminus) with yap-1 (via WW domain). The cofactor is Mg(2+). As to expression, expressed in muscles and epithelial tissues including pharynx, intestine and hypodermis. Expressed in vulval and spermathecal seam cells.

It is found in the cytoplasm. The protein resides in the apical cell membrane. It catalyses the reaction L-seryl-[protein] + ATP = O-phospho-L-seryl-[protein] + ADP + H(+). The enzyme catalyses L-threonyl-[protein] + ATP = O-phospho-L-threonyl-[protein] + ADP + H(+). Phosphorylates yap-1 which may negatively regulate yap-1 nuclear localization. Plays an essential role in larval development. Regulates growth, the formation of gut granules, lifespan and cell and body sizes probably in synergy with the TGF-beta sma/mab pathway. Does not appear to regulate apoptosis and proliferation. In addition, may synergize with the TGF-beta daf-7 dauer pathway to regulate entry into the dauer stage. Maintains the cellular integrity of intestinal cells by regulating the localization of apical actin and junctional proteins. This Caenorhabditis elegans protein is Serine/threonine-protein kinase WARTS homolog.